The sequence spans 484 residues: Ribosome biogenesis protein YTM1 (484 aa).

The interval 13–95 (VKVTFTTTEA…ESNLTLQYVR (83 aa)) is ubiquitin-like (UBL) domain. WD repeat units follow at residues 122 to 161 (SPSG…IATS), 168 to 206 (GHTA…HFSG), 216 to 255 (GHTG…APEA), 288 to 328 (IHSA…VVTT), 330 to 373 (STSH…ATTS), 379 to 419 (GHAN…PATQ), and 448 to 484 (GEGC…VVAE).

It belongs to the WD repeat WDR12/YTM1 family. As to quaternary structure, component of the NOP7 complex, composed of ERB1, NOP7 and YTM1. The complex is held together by ERB1, which interacts with NOP7 via its N-terminal domain and with YTM1 via a high-affinity interaction between the seven-bladed beta-propeller domains of the 2 proteins. The NOP7 complex associates with the 66S pre-ribosome. Interacts (via UBL domain) with MDN1 (via VWFA/MIDAS domain).

It localises to the nucleus. The protein localises to the nucleolus. Its subcellular location is the nucleoplasm. Component of the NOP7 complex, which is required for maturation of the 25S and 5.8S ribosomal RNAs and formation of the 60S ribosome. This chain is Ribosome biogenesis protein YTM1, found in Chaetomium globosum (strain ATCC 6205 / CBS 148.51 / DSM 1962 / NBRC 6347 / NRRL 1970) (Soil fungus).